The chain runs to 133 residues: Small ribosomal subunit protein uS8 (133 aa).

Belongs to the universal ribosomal protein uS8 family. As to quaternary structure, part of the 30S ribosomal subunit. Contacts proteins S5 and S12.

Its function is as follows. One of the primary rRNA binding proteins, it binds directly to 16S rRNA central domain where it helps coordinate assembly of the platform of the 30S subunit. The sequence is that of Small ribosomal subunit protein uS8 from Rippkaea orientalis (strain PCC 8801 / RF-1) (Cyanothece sp. (strain PCC 8801)).